The sequence spans 166 residues: ATP synthase subunit b (166 aa).

The helical transmembrane segment at 15–37 (TLYYLLIFAALLLLVKHFAWGPV) threads the bilayer.

The protein belongs to the ATPase B chain family. In terms of assembly, F-type ATPases have 2 components, F(1) - the catalytic core - and F(0) - the membrane proton channel. F(1) has five subunits: alpha(3), beta(3), gamma(1), delta(1), epsilon(1). F(0) has three main subunits: a(1), b(2) and c(10-14). The alpha and beta chains form an alternating ring which encloses part of the gamma chain. F(1) is attached to F(0) by a central stalk formed by the gamma and epsilon chains, while a peripheral stalk is formed by the delta and b chains.

It is found in the cell membrane. In terms of biological role, f(1)F(0) ATP synthase produces ATP from ADP in the presence of a proton or sodium gradient. F-type ATPases consist of two structural domains, F(1) containing the extramembraneous catalytic core and F(0) containing the membrane proton channel, linked together by a central stalk and a peripheral stalk. During catalysis, ATP synthesis in the catalytic domain of F(1) is coupled via a rotary mechanism of the central stalk subunits to proton translocation. Functionally, component of the F(0) channel, it forms part of the peripheral stalk, linking F(1) to F(0). The sequence is that of ATP synthase subunit b from Lactobacillus gasseri (strain ATCC 33323 / DSM 20243 / BCRC 14619 / CIP 102991 / JCM 1131 / KCTC 3163 / NCIMB 11718 / NCTC 13722 / AM63).